Here is an 86-residue protein sequence, read N- to C-terminus: Large ribosomal subunit protein uL23 (86 aa).

It belongs to the universal ribosomal protein uL23 family. In terms of assembly, part of the 50S ribosomal subunit. Contacts protein L29.

Its function is as follows. Binds to 23S rRNA. One of the proteins that surrounds the polypeptide exit tunnel on the outside of the ribosome. This chain is Large ribosomal subunit protein uL23, found in Methanococcus vannielii (strain ATCC 35089 / DSM 1224 / JCM 13029 / OCM 148 / SB).